The chain runs to 29 residues: GLPVCGETCTLGKCYTAGCSCSWPVCYRN.

Positions 1–29 (GLPVCGETCTLGKCYTAGCSCSWPVCYRN) form a cross-link, cyclopeptide (Gly-Asn). 3 disulfide bridges follow: Cys5–Cys19, Cys9–Cys21, and Cys14–Cys26.

In terms of processing, this is a cyclic peptide.

Probably participates in a plant defense mechanism. The protein is Vodo peptide N of Viola odorata (Sweet violet).